The sequence spans 322 residues: Putative ankyrin repeat protein L897 (322 aa).

ANK repeat units follow at residues 88-117 (DNEY…SYDM), 181-210 (NIID…FWAN), and 248-277 (NKNE…QTDH).

This chain is Putative ankyrin repeat protein L897, found in Acanthamoeba polyphaga (Amoeba).